The sequence spans 323 residues: tRNA-cytidine(32) 2-sulfurtransferase (323 aa).

The PP-loop motif signature appears at 49-54 (SGGKDS). Cysteine 124, cysteine 127, and cysteine 215 together coordinate [4Fe-4S] cluster.

It belongs to the TtcA family. As to quaternary structure, homodimer. Mg(2+) is required as a cofactor. It depends on [4Fe-4S] cluster as a cofactor.

The protein localises to the cytoplasm. It carries out the reaction cytidine(32) in tRNA + S-sulfanyl-L-cysteinyl-[cysteine desulfurase] + AH2 + ATP = 2-thiocytidine(32) in tRNA + L-cysteinyl-[cysteine desulfurase] + A + AMP + diphosphate + H(+). It participates in tRNA modification. In terms of biological role, catalyzes the ATP-dependent 2-thiolation of cytidine in position 32 of tRNA, to form 2-thiocytidine (s(2)C32). The sulfur atoms are provided by the cysteine/cysteine desulfurase (IscS) system. This Shewanella denitrificans (strain OS217 / ATCC BAA-1090 / DSM 15013) protein is tRNA-cytidine(32) 2-sulfurtransferase.